Reading from the N-terminus, the 934-residue chain is Protocadherin gamma-C3 (934 aa).

The first 31 residues, Met1–Thr31, serve as a signal peptide directing secretion. 6 Cadherin domains span residues Val32 to Phe135, Pro136 to Phe244, Asn245 to Ile352, Thr353 to Ser457, Ser458 to Val567, and Pro572 to Glu685. The Extracellular segment spans residues Val32–Tyr693. 6 N-linked (GlcNAc...) asparagine glycosylation sites follow: Asn245, Asn424, Asn478, Asn550, Asn615, and Asn689. Residues Leu694–Ile714 traverse the membrane as a helical segment. Over Phe715–Lys934 the chain is Cytoplasmic. 2 disordered regions span residues Glu804–Asn843 and Ala904–Lys934. Residues Ala812–Asn843 show a composition bias toward polar residues. A compositionally biased stretch (basic residues) spans Asn924–Lys934.

The protein resides in the cell membrane. Functionally, potential calcium-dependent cell-adhesion protein. May be involved in the establishment and maintenance of specific neuronal connections in the brain. This chain is Protocadherin gamma-C3 (PCDHGC3), found in Homo sapiens (Human).